Consider the following 320-residue polypeptide: tRNA U34 carboxymethyltransferase (320 aa).

Carboxy-S-adenosyl-L-methionine-binding positions include K89, W103, K108, G128, 150-152 (DPT), 179-180 (IE), M194, Y198, and R313.

This sequence belongs to the class I-like SAM-binding methyltransferase superfamily. CmoB family. Homotetramer.

It carries out the reaction carboxy-S-adenosyl-L-methionine + 5-hydroxyuridine(34) in tRNA = 5-carboxymethoxyuridine(34) in tRNA + S-adenosyl-L-homocysteine + H(+). Catalyzes carboxymethyl transfer from carboxy-S-adenosyl-L-methionine (Cx-SAM) to 5-hydroxyuridine (ho5U) to form 5-carboxymethoxyuridine (cmo5U) at position 34 in tRNAs. This chain is tRNA U34 carboxymethyltransferase, found in Actinobacillus pleuropneumoniae serotype 7 (strain AP76).